We begin with the raw amino-acid sequence, 571 residues long: Leiomodin-3 (571 aa).

Disordered stretches follow at residues 1–29 (MSGHSRNSEQEDTLSEELDEDELLANLSP), 46–67 (PHLPVGMIQKDQTDKAPTGNFN), and 91–228 (PVSF…AKLD). A compositionally biased stretch (acidic residues) spans 10 to 23 (QEDTLSEELDEDEL). The segment covering 94-105 (FVQSEKNTQNQR) has biased composition (polar residues). The span at 119 to 134 (LKEKLNSEILAKKRES) shows a compositional bias: basic and acidic residues. Over residues 142–179 (EAEDDDEDEEEEEEDDEDEEEEEEDEEDDEGEEDEDGE) the composition is skewed to acidic residues. A compositionally biased stretch (basic and acidic residues) spans 180-192 (QANREKNDAKEQI). The span at 193–204 (HNNPGTYQQLAT) shows a compositional bias: polar residues. Positions 206–228 (TAHEQKDTSETKEKGEKKIAKLD) are enriched in basic and acidic residues. A coiled-coil region spans residues 397 to 436 (VTNLLTRNQDKRRQKRQEEQQQQQLKEQRKLIAMLENGLG). The 20-residue stretch at 545–564 (PRDQLLNDIRHSNVAYLKPV) folds into the WH2 domain.

This sequence belongs to the tropomodulin family. As to quaternary structure, may interact with tropomyosin alpha (TPM1/2) N-terminus. Interacts with KLHL40; leading to stabilization. Post-translationally, ubiquitinated, leading to its degradation. Interaction with KLHL40 negatively regulates ubiquitination and degradation. In terms of tissue distribution, skeletal muscle and heart-specific (at protein level).

Its subcellular location is the cytoplasm. The protein localises to the myofibril. The protein resides in the sarcomere. It is found in the a band. It localises to the m line. Its subcellular location is the cytoskeleton. In terms of biological role, essential for the organization of sarcomeric actin thin filaments in skeletal muscle. Increases the rate of actin polymerization. The polypeptide is Leiomodin-3 (Mus musculus (Mouse)).